The chain runs to 331 residues: Anthranilate phosphoribosyltransferase (331 aa).

5-phospho-alpha-D-ribose 1-diphosphate contacts are provided by residues G78, 81 to 82 (GD), S86, 88 to 91 (NIST), 106 to 114 (KHGNKSITS), and S118. G78 is a binding site for anthranilate. S90 provides a ligand contact to Mg(2+). N109 provides a ligand contact to anthranilate. An anthranilate-binding site is contributed by R163. The Mg(2+) site is built by D222 and E223.

This sequence belongs to the anthranilate phosphoribosyltransferase family. In terms of assembly, homodimer. It depends on Mg(2+) as a cofactor.

It catalyses the reaction N-(5-phospho-beta-D-ribosyl)anthranilate + diphosphate = 5-phospho-alpha-D-ribose 1-diphosphate + anthranilate. It functions in the pathway amino-acid biosynthesis; L-tryptophan biosynthesis; L-tryptophan from chorismate: step 2/5. Its function is as follows. Catalyzes the transfer of the phosphoribosyl group of 5-phosphorylribose-1-pyrophosphate (PRPP) to anthranilate to yield N-(5'-phosphoribosyl)-anthranilate (PRA). This is Anthranilate phosphoribosyltransferase from Staphylococcus epidermidis (strain ATCC 35984 / DSM 28319 / BCRC 17069 / CCUG 31568 / BM 3577 / RP62A).